A 335-amino-acid polypeptide reads, in one-letter code: Protein-arginine kinase (335 aa).

In terms of domain architecture, Phosphagen kinase C-terminal spans 20–243 (IVMSSRIRLA…QQIINEEMQI (224 aa)). Residues 23–27 (SSRIR), His81, Arg114, 165–169 (RASVM), and 196–201 (RGIYGE) each bind ATP.

The protein belongs to the ATP:guanido phosphotransferase family.

It catalyses the reaction L-arginyl-[protein] + ATP = N(omega)-phospho-L-arginyl-[protein] + ADP + H(+). Catalyzes the specific phosphorylation of arginine residues in proteins. In Staphylococcus haemolyticus (strain JCSC1435), this protein is Protein-arginine kinase.